Here is a 378-residue protein sequence, read N- to C-terminus: Formate dehydrogenase 2, mitochondrial (378 aa).

A mitochondrion-targeting transit peptide spans 1 to 18 (MAMWRAPSAAGQLLGRAL). Substrate is bound by residues Val-122 and Asn-146. Residues Thr-147, 201 to 202 (RI), Asp-221, 256 to 260 (PLTEK), Asn-282, Asp-308, and 332 to 335 (HCSG) each bind NAD(+).

It belongs to the D-isomer specific 2-hydroxyacid dehydrogenase family. FDH subfamily. Homodimer.

It is found in the mitochondrion. It catalyses the reaction formate + NAD(+) = CO2 + NADH. Catalyzes the NAD(+)-dependent oxidation of formate to carbon dioxide. Involved in the cell stress response. This Oryza sativa subsp. japonica (Rice) protein is Formate dehydrogenase 2, mitochondrial.